The following is a 687-amino-acid chain: A-kinase anchor protein 8 (687 aa).

The tract at residues 1–195 (MEQGYGGYGA…FLRGRGQGRF (195 aa)) is interaction with MCM2. The interval 1–210 (MEQGYGGYGA…SSTFIRSDPF (210 aa)) is interaction with DPY30. Ser72 is modified (phosphoserine). Disordered regions lie at residues 105 to 124 (KEGG…DRDS) and 185 to 218 (GFLR…ASEP). An Asymmetric dimethylarginine; alternate modification is found at Arg109. Arg109 is modified (omega-N-methylarginine; alternate). Residues 109 to 118 (RGGISSGGEG) show a composition bias toward gly residues. The interval 109-201 (RGGISSGGEG…QGRFQDRSNS (93 aa)) is interaction with DDX5. Phosphoserine is present on Ser199. 2 positions are modified to omega-N-methylarginine: Arg232 and Arg276. The disordered stretch occupies residues 277–379 (SQTRIRDWPR…KQRRRDRMRD (103 aa)). Basic and acidic residues-rich tracts occupy residues 280–294 (RIRD…ERFG) and 311–320 (PDAKLARADS). The Bipartite nuclear localization signal signature appears at 286-303 (RRRGFERFGPDNMGRKRK). Lys314 participates in a covalent cross-link: Glycyl lysine isopeptide (Lys-Gly) (interchain with G-Cter in SUMO2). Phosphoserine occurs at positions 320, 325, and 336. Residues 321–331 (DGDLSENDDGA) are compositionally biased toward acidic residues. Basic and acidic residues predominate over residues 335 to 357 (RSGDEEFRGEDDLCDSRKQRGEK). The tract at residues 384–447 (RIQFACSVCK…NKKIEKRRQE (64 aa)) is involved in chromatin-binding. C2H2 AKAP95-type zinc fingers lie at residues 389–411 (CSVC…SKFH) and 478–501 (CLAC…SVDH). The involved in condensin complex recruitment stretch occupies residues 522–565 (SVLNNKHIVKMLEKYLKGEDPFVNETADLETEGDENVGEEKEET). The residue at position 552 (Thr552) is a Phosphothreonine. Positions 568 to 585 (EVAAEVLAEVITAAVKAV) are RII-binding. The interval 572–589 (EVLAEVITAAVKAVEGEG) is required for interaction with MYCBP. The tract at residues 624-659 (QTCEAASETRSIEDKTRGEAAEARNEAAMPTADAGS) is disordered. A compositionally biased stretch (basic and acidic residues) spans 633–648 (RSIEDKTRGEAAEARN). Phosphoserine is present on Ser659.

Belongs to the AKAP95 family. In terms of assembly, binds to the PKA RII-alpha regulatory subunit PRKAR2A. Interacts (via C-terminus) with FIGN. Interacts with NCAPD2, CCND3, CCNE1, MCM2, RPS6KA1, DDX5, PDE4A. Interacts with MYCBP; MYCBP is translocated to the nucleus and the interaction prevents the association of the PKA catalytic subunit leading to suppression of PKA activity. Interacts with CCND1, CASP3. Interacts with NFKB1; detetcted in the cytoplasm. Interacts with DPY30; mediating AKAP8 association with at least the MLL4/WBP7 HMT complex. Interacts with HDAC3; increased during mitosis. Interacts with GJA1; in the nucleus and in the nuclear membrane; the nuclear association increases with progress of cell cycle G1, S and G2 phase and decreases in M phase. Phosphorylated on tyrosine residues probably by SRC subfamily protein kinases; multiple phosphorylation is leading to dissociation from nuclear structures implicated in chromatin structural changes.

It localises to the nucleus matrix. Its subcellular location is the nucleus. The protein localises to the nucleolus. It is found in the cytoplasm. Anchoring protein that mediates the subcellular compartmentation of cAMP-dependent protein kinase (PKA type II). Acts as an anchor for a PKA-signaling complex onto mitotic chromosomes, which is required for maintenance of chromosomes in a condensed form throughout mitosis. Recruits condensin complex subunit NCAPD2 to chromosomes required for chromatin condensation; the function appears to be independent from PKA-anchoring. Specifically involved in recruitment of CAPD2 to, and condensation of maternal but not paternal chromosomes. May help to deliver cyclin D/E to CDK4 to facilitate cell cycle progression. Required for cell cycle G2/M transition and histone deacetylation during mitosis. In mitotic cells recruits HDAC3 to the vicinity of chromatin leading to deacetylation and subsequent phosphorylation at 'Ser-10' of histone H3; in this function may act redundantly with AKAP8L. Involved in nuclear retention of RPS6KA1 upon ERK activation thus inducing cell proliferation. May be involved in regulation of DNA replication by acting as scaffold for MCM2. Enhances HMT activity of the KMT2 family MLL4/WBP7 complex and is involved in transcriptional regulation. In a teratocarcinoma cell line is involved in retinoic acid-mediated induction of developmental genes implicating H3 'Lys-4' methylation. May be involved in recruitment of active CASP3 to the nucleus in apoptotic cells. May act as a carrier protein of GJA1 for its transport to the nucleus. May play a repressive role in the regulation of rDNA transcription. Preferentially binds GC-rich DNA in vitro. In cells, associates with ribosomal RNA (rRNA) chromatin, preferentially with rRNA promoter and transcribed regions. Involved in modulation of Toll-like receptor signaling. Required for the cAMP-dependent suppression of TNF-alpha in early stages of LPS-induced macrophage activation; the function probably implicates targeting of PKA to NFKB1. In Mus musculus (Mouse), this protein is A-kinase anchor protein 8 (Akap8).